We begin with the raw amino-acid sequence, 2007 residues long: Structural maintenance of chromosomes flexible hinge domain-containing protein 1 (2007 aa).

At Ala-2 the chain carries N-acetylalanine. Positions 111–702 (TKERIDFLPH…LSVTWPEGDE (592 aa)) are ATPase activity domain. Ser-833 is subject to Phosphoserine. An N6-acetyllysine modification is found at Lys-1350. Residue Lys-1375 forms a Glycyl lysine isopeptide (Lys-Gly) (interchain with G-Cter in SUMO2) linkage. Thr-1500 is subject to Phosphothreonine. Positions 1721–1848 (GDILGKIAHL…DNLDAANHYR (128 aa)) constitute an SMC hinge domain. The residue at position 1803 (Lys-1803) is an N6-succinyllysine. Ser-1975 carries the phosphoserine modification. Positions 1984 to 2007 (PIPTKRMRRESTRQNRRPKGDVPN) are disordered.

Belongs to the SMC family. Highly divergent. In terms of assembly, homodimer; homodimerizes via its SMC hinge domain. Interacts with LRIF1. Post-translationally, sumoylated with SUMO1. As to expression, during embryogenesis, specifically expressed in immature olfactory sensory neurons.

It is found in the chromosome. The catalysed reaction is ATP + H2O = ADP + phosphate + H(+). In terms of biological role, non-canonical member of the structural maintenance of chromosomes (SMC) protein family that plays a key role in epigenetic silencing by regulating chromatin architecture. Promotes heterochromatin formation in both autosomes and chromosome X, probably by mediating the merge of chromatin compartments. Plays a key role in chromosome X inactivation in females by promoting the spreading of heterochromatin. Recruited to inactivated chromosome X by Xist RNA and acts by mediating the merge of chromatin compartments: promotes random chromatin interactions that span the boundaries of existing structures, leading to create a compartment-less architecture typical of inactivated chromosome X. Required to facilitate Xist RNA spreading. Also required for silencing of a subset of clustered autosomal loci in somatic cells, such as the DUX4 locus. Has ATPase activity; may participate in structural manipulation of chromatin in an ATP-dependent manner as part of its role in gene expression regulation. Also plays a role in DNA repair: localizes to sites of DNA double-strand breaks in response to DNA damage to promote the repair of DNA double-strand breaks. Acts by promoting non-homologous end joining (NHEJ) and inhibiting homologous recombination (HR) repair. Required during preimplantation development, probably acts by regulating chromatin architecture. This chain is Structural maintenance of chromosomes flexible hinge domain-containing protein 1, found in Mus musculus (Mouse).